The primary structure comprises 512 residues: Chitin synthase regulatory factor 2 (512 aa).

6 Sel1-like repeats span residues 224–260 (SEALYLLAVCYGTGALRTEINEKEAYRLYKMAADLNH), 261–296 (VQAAYRVAICLQMGFGVTQNTEEAIHYFFRAASGQH), 297–333 (VGAMHRMALIYFRGLMSVKRDPVKAMYYLNLGALEAD), 337–377 (PQAL…KYGL), 378–414 (KDAQLRVARCFELGQLECDINLVRSFVWYRRLARKRN), and 415–452 (PEAMWKLSQFYLNGVDDVIYPNPELANEWAKAAAYKNH). Cysteine methyl ester is present on C509. A lipid anchor (S-farnesyl cysteine) is attached at C509. Positions 510 to 512 (IIS) are cleaved as a propeptide — removed in mature form.

The protein resides in the membrane. Its function is as follows. Involved in chitin biosynthesis. In Schizosaccharomyces pombe (strain 972 / ATCC 24843) (Fission yeast), this protein is Chitin synthase regulatory factor 2 (chr2).